Here is a 542-residue protein sequence, read N- to C-terminus: Protein lin-9 homolog (542 aa).

Alanine 2 is subject to N-acetylalanine. A sufficient for interaction with RB1 region spans residues 2–296; the sequence is AELDQLPDES…QKQRPSRFFM (295 aa). Lysine 21 participates in a covalent cross-link: Glycyl lysine isopeptide (Lys-Gly) (interchain with G-Cter in SUMO2). Phosphoserine is present on residues serine 65 and serine 95. Threonine 96 and threonine 304 each carry phosphothreonine. Residues serine 309 and serine 321 each carry the phosphoserine modification. Residues 354 to 413 adopt a coiled-coil conformation; that stretch reads MIKKEHIKKLREMNTEAEKLKSYSMPISIEFQRRYATIVLELEQLNKDLNKVLHKVQQYC.

It belongs to the lin-9 family. Component of the DREAM complex (also named LINC complex) at least composed of E2F4, E2F5, LIN9, LIN37, LIN52, LIN54, MYBL1, MYBL2, RBL1, RBL2, RBBP4, TFDP1 and TFDP2. The complex exists in quiescent cells where it represses cell cycle-dependent genes. It dissociates in S phase when LIN9, LIN37, LIN52 and LIN54 form a subcomplex that binds to MYBL2. Interacts with RB1. As to expression, expressed in thymus and testis.

It is found in the nucleus. It localises to the nucleoplasm. Functionally, acts as a tumor suppressor. Inhibits DNA synthesis. Its ability to inhibit oncogenic transformation is mediated through its association with RB1. Plays a role in the expression of genes required for the G1/S transition. The polypeptide is Protein lin-9 homolog (LIN9) (Homo sapiens (Human)).